A 340-amino-acid chain; its full sequence is MAIMNDIAQDAARAWDIIAGPFIRPGTTPTNRQLFNYQIGNIEVEPGNLNFSVVPELDFSVSQDLFNNTSVQQSQTASFNESRTETTSTAVTHGVKSGVTVSASAKFNAKILVKSIEQTITTTVSTEYNFSSTTTRTNTVTRGWSIAQPVLVPPHSRVTATLQIYKGDFTVPVLLSLRVYGQTGTLAGNPSFPSLYAATYENTLLGRIREHIAPPALFRASNAYISNGVQAIWRGTATTRVSQGLYSVVRIDERPLAGYSGETRTYYLPVTLSNSSQILTPGSLGSEIPIINPVPNASCKKENSPIIIHHDREKHRERDYDKEHICHDQAEKYERDYDKE.

A disordered region spans residues Arg318 to Glu340.

In terms of biological role, promotes colloidosmotic lysis by binding to the midgut epithelial cells of lepidopteran larvae. The sequence is that of Pesticidal crystal protein Cry15Aa (cry15Aa) from Bacillus thuringiensis subsp. thompsoni.